The following is a 172-amino-acid chain: Adenine phosphoribosyltransferase (172 aa).

Belongs to the purine/pyrimidine phosphoribosyltransferase family. Homodimer.

The protein localises to the cytoplasm. The catalysed reaction is AMP + diphosphate = 5-phospho-alpha-D-ribose 1-diphosphate + adenine. Its pathway is purine metabolism; AMP biosynthesis via salvage pathway; AMP from adenine: step 1/1. Its function is as follows. Catalyzes a salvage reaction resulting in the formation of AMP, that is energically less costly than de novo synthesis. The sequence is that of Adenine phosphoribosyltransferase from Nostoc punctiforme (strain ATCC 29133 / PCC 73102).